The primary structure comprises 119 residues: Ribonuclease P protein component (119 aa).

The disordered stretch occupies residues 1–20; it reads MLPAQHRMTRSTEFGATVSK.

The protein belongs to the RnpA family. Consists of a catalytic RNA component (M1 or rnpB) and a protein subunit.

It catalyses the reaction Endonucleolytic cleavage of RNA, removing 5'-extranucleotides from tRNA precursor.. Its function is as follows. RNaseP catalyzes the removal of the 5'-leader sequence from pre-tRNA to produce the mature 5'-terminus. It can also cleave other RNA substrates such as 4.5S RNA. The protein component plays an auxiliary but essential role in vivo by binding to the 5'-leader sequence and broadening the substrate specificity of the ribozyme. This Mycolicibacterium vanbaalenii (strain DSM 7251 / JCM 13017 / BCRC 16820 / KCTC 9966 / NRRL B-24157 / PYR-1) (Mycobacterium vanbaalenii) protein is Ribonuclease P protein component.